The chain runs to 132 residues: Pro-MCH 1 (132 aa).

The signal sequence occupies residues M1 to A24. The cysteines at positions 120 and 129 are disulfide-linked.

The protein belongs to the melanin-concentrating hormone family. In terms of tissue distribution, pituitary gland. Produced in neurons of lateral basal hypothalamus which project both to the brain and to the neural lobe of the pituitary gland from where MCH is released.

Functionally, plays a role in skin pigmentation by antagonizing the action of melanotropin alpha. Induces melanin concentration within the melanophores. May participate in the control of the hypothalamo-pituitary adrenal gland axis by inhibiting the release of ACTH. The protein is Pro-MCH 1 (mch1) of Oncorhynchus mykiss (Rainbow trout).